The chain runs to 258 residues: N(G),N(G)-dimethylarginine dimethylaminohydrolase (258 aa).

Residues L19, D62, 67–68 (ED), R87, and R133 each bind substrate. The Proton donor role is filled by H163. C248 acts as the Nucleophile in catalysis.

It belongs to the DDAH family.

The enzyme catalyses N(omega),N(omega)-dimethyl-L-arginine + H2O = dimethylamine + L-citrulline. It catalyses the reaction N(omega)-methyl-L-arginine + H2O = L-citrulline + methylamine. Its function is as follows. Hydrolyzes N(G),N(G)-dimethyl-L-arginine (ADMA) and N(G)-monomethyl-L-arginine (MMA). The sequence is that of N(G),N(G)-dimethylarginine dimethylaminohydrolase (ddaH) from Streptomyces coelicolor (strain ATCC BAA-471 / A3(2) / M145).